Reading from the N-terminus, the 284-residue chain is Tropomyosin (284 aa).

The disordered stretch occupies residues 1–47 (MDAIKKKMQAMKIEKDNAMDRADAAEEKARQQQERVEKLEEELRDTQ). The stretch at 1-284 (MDAIKKKMQA…DQTFQELSGY (284 aa)) forms a coiled coil. Residues 12–38 (KIEKDNAMDRADAAEEKARQQQERVEK) show a composition bias toward basic and acidic residues.

The protein belongs to the tropomyosin family.

Functionally, tropomyosin, in association with the troponin complex, plays a central role in the calcium dependent regulation of muscle contraction. This Trichinella spiralis (Trichina worm) protein is Tropomyosin.